The sequence spans 202 residues: Ribonuclease HII (202 aa).

Residues 18–202 (GQYAGVDEVG…KSFRPVREAM (185 aa)) enclose the RNase H type-2 domain. The a divalent metal cation site is built by D24, E25, and D116.

The protein belongs to the RNase HII family. Mn(2+) serves as cofactor. It depends on Mg(2+) as a cofactor.

The protein resides in the cytoplasm. The enzyme catalyses Endonucleolytic cleavage to 5'-phosphomonoester.. Endonuclease that specifically degrades the RNA of RNA-DNA hybrids. The sequence is that of Ribonuclease HII from Shewanella piezotolerans (strain WP3 / JCM 13877).